The chain runs to 161 residues: General odorant-binding protein 2 (161 aa).

Positions 1-20 are cleaved as a signal peptide; it reads MVNRLILMVVVVFITDSVMG. 3 disulfides stabilise this stretch: cysteine 39–cysteine 74, cysteine 70–cysteine 128, and cysteine 117–cysteine 137.

Belongs to the PBP/GOBP family. Homodimer. In terms of tissue distribution, olfactory tissue; expressed by the glia-like support cells that ensheathe the sensory neurons and line the base of the sensillum lumen.

In terms of biological role, present in the aqueous fluid surrounding olfactory sensory dendrites and are thought to aid in the capture and transport of hydrophobic odorants into and through this fluid. The sequence is that of General odorant-binding protein 2 (GOBP2) from Manduca sexta (Tobacco hawkmoth).